An 80-amino-acid polypeptide reads, in one-letter code: Large ribosomal subunit protein bL31 (80 aa).

Residues cysteine 16, cysteine 18, cysteine 38, and cysteine 41 each coordinate Zn(2+).

It belongs to the bacterial ribosomal protein bL31 family. Type A subfamily. In terms of assembly, part of the 50S ribosomal subunit. Zn(2+) is required as a cofactor.

Binds the 23S rRNA. This chain is Large ribosomal subunit protein bL31, found in Mycobacterium avium (strain 104).